The following is a 112-amino-acid chain: Frizzy aggregation protein FrzB (112 aa).

Functionally, necessary for proper aggregation of cells to form fruiting bodies. FRZ genes define a system of signal transduction analogous to the enterobacterial chemotaxis systems. The chain is Frizzy aggregation protein FrzB (frzB) from Myxococcus xanthus.